Consider the following 127-residue polypeptide: Holo-[acyl-carrier-protein] synthase (127 aa).

Positions 9 and 58 each coordinate Mg(2+).

This sequence belongs to the P-Pant transferase superfamily. AcpS family. Mg(2+) serves as cofactor.

It is found in the cytoplasm. It catalyses the reaction apo-[ACP] + CoA = holo-[ACP] + adenosine 3',5'-bisphosphate + H(+). Transfers the 4'-phosphopantetheine moiety from coenzyme A to a Ser of acyl-carrier-protein. This is Holo-[acyl-carrier-protein] synthase from Shewanella sp. (strain MR-4).